Here is a 361-residue protein sequence, read N- to C-terminus: Molybdopterin synthase catalytic subunit (361 aa).

Residues 101-102 (HR), Lys117, and 124-126 (KKE) contribute to the substrate site.

Belongs to the MoaE family. MOCS2B subfamily. Heterotetramer; composed of 2 small (Mocs2A) and 2 large (Mocs2B) subunits.

It localises to the cytoplasm. The catalysed reaction is 2 [molybdopterin-synthase sulfur-carrier protein]-C-terminal-Gly-aminoethanethioate + cyclic pyranopterin phosphate + H2O = molybdopterin + 2 [molybdopterin-synthase sulfur-carrier protein]-C-terminal Gly-Gly + 2 H(+). The protein operates within cofactor biosynthesis; molybdopterin biosynthesis. Its function is as follows. Catalytic subunit of the molybdopterin synthase complex, a complex that catalyzes the conversion of precursor Z into molybdopterin. Acts by mediating the incorporation of 2 sulfur atoms from thiocarboxylated Mocs2A into precursor Z to generate a dithiolene group. The protein is Molybdopterin synthase catalytic subunit of Drosophila persimilis (Fruit fly).